Reading from the N-terminus, the 341-residue chain is tRNA N6-adenosine threonylcarbamoyltransferase (341 aa).

Residues histidine 115 and histidine 119 each contribute to the Fe cation site. Residues 138–142, aspartate 171, glycine 184, and asparagine 276 each bind substrate; that span reads LVSGG. Residue aspartate 304 participates in Fe cation binding.

The protein belongs to the KAE1 / TsaD family. Requires Fe(2+) as cofactor.

The protein resides in the cytoplasm. The catalysed reaction is L-threonylcarbamoyladenylate + adenosine(37) in tRNA = N(6)-L-threonylcarbamoyladenosine(37) in tRNA + AMP + H(+). Its function is as follows. Required for the formation of a threonylcarbamoyl group on adenosine at position 37 (t(6)A37) in tRNAs that read codons beginning with adenine. Is involved in the transfer of the threonylcarbamoyl moiety of threonylcarbamoyl-AMP (TC-AMP) to the N6 group of A37, together with TsaE and TsaB. TsaD likely plays a direct catalytic role in this reaction. This Stenotrophomonas maltophilia (strain K279a) protein is tRNA N6-adenosine threonylcarbamoyltransferase.